The sequence spans 314 residues: Three-prime repair exonuclease 1 (314 aa).

Positions 18 and 20 each coordinate Mg(2+). Glu20 to Ala21 is a binding site for substrate. Ser78 bears the Phosphoserine mark. Tyr129 lines the substrate pocket. Ser167 carries the phosphoserine modification. The active-site Proton donor/acceptor is the His195. Asp200 provides a ligand contact to Mg(2+). Asp200 is a binding site for substrate. The interval Thr236–Glu314 is necessary for endoplasmic reticulum localization. Positions Arg240 to Asp278 are disordered. An interaction with UBQLN1 region spans residues Pro243 to Glu314. Over residues Ala247–Thr260 the composition is skewed to low complexity. Ser261 carries the phosphoserine modification. Residues Ala281–Glu314 form a necessary for cytoplasmic retention region.

Belongs to the exonuclease superfamily. TREX family. Homodimer. Interacts (via proline-rich region) with TCERG1/CA150 (via the second WW domain). Component of the SET complex, composed of at least ANP32A, APEX1, HMGB2, NME1, SET and TREX1. Within this complex, directly interacts with SET; this interaction does not result in TREX1 inhibition. Also interacts with NME1, but only following translocation to the nucleus. Directly interacts with UBQLN1 (via ubiquitin-like domain); the interaction may control TREX1 subcellular location. It depends on Mg(2+) as a cofactor. Post-translationally, ubiquitinated, but not targeted to proteasomal degradation. Ubiquitination may be important for interaction with UBQLN1. As to expression, detected in thymus, spleen, liver, brain, heart, small intestine and colon.

It is found in the nucleus. The protein localises to the cytoplasm. Its subcellular location is the cytosol. The protein resides in the endoplasmic reticulum membrane. The catalysed reaction is Exonucleolytic cleavage in the 3'- to 5'-direction to yield nucleoside 5'-phosphates.. In terms of biological role, major cellular 3'-to-5' DNA exonuclease which digests single-stranded DNA (ssDNA) and double-stranded DNA (dsDNA) with mismatched 3' termini. Prevents cell-intrinsic initiation of autoimmunity. Acts by metabolizing DNA fragments from endogenous retroelements, including L1, LTR and SINE elements. Plays a key role in degradation of DNA fragments at cytosolic micronuclei arising from genome instability: its association with the endoplasmic reticulum membrane directs TREX1 to ruptured micronuclei, leading to micronuclear DNA degradation. Micronuclear DNA degradation is required to limit CGAS activation and subsequent inflammation. Unless degraded, these DNA fragments accumulate in the cytosol and activate the cGAS-STING innate immune signaling, leading to the production of type I interferon. Prevents chronic ATM-dependent checkpoint activation, by processing ssDNA polynucleotide species arising from the processing of aberrant DNA replication intermediates. Inefficiently degrades oxidized DNA, such as that generated upon antimicrobial reactive oxygen production or upon absorption of UV light. During GZMA-mediated cell death, contributes to DNA damage in concert with NME1. NME1 nicks one strand of DNA and TREX1 removes bases from the free 3' end to enhance DNA damage and prevent DNA end reannealing and rapid repair. The protein is Three-prime repair exonuclease 1 of Homo sapiens (Human).